The primary structure comprises 424 residues: CinA-like protein (424 aa).

This sequence belongs to the CinA family.

The protein is CinA-like protein of Shewanella baltica (strain OS155 / ATCC BAA-1091).